Here is a 152-residue protein sequence, read N- to C-terminus: D-erythrulose-4-phosphate isomerase (152 aa).

Cysteine 67 functions as the Proton acceptor in the catalytic mechanism.

The protein belongs to the LacAB/RpiB family.

The enzyme catalyses D-erythrulose 4-phosphate = D-erythrose 4-phosphate. Its pathway is carbohydrate metabolism. Functionally, involved in catabolism of D-apiose. Catalyzes the isomerization of D-erythrulose 4-phosphate to D-erythrose 4-phosphate. The protein is D-erythrulose-4-phosphate isomerase of Pectobacterium atrosepticum (strain SCRI 1043 / ATCC BAA-672) (Erwinia carotovora subsp. atroseptica).